Consider the following 216-residue polypeptide: Cytidylate kinase (216 aa).

7-15 provides a ligand contact to ATP; sequence GPSGTGKST.

Belongs to the cytidylate kinase family. Type 1 subfamily.

Its subcellular location is the cytoplasm. The catalysed reaction is CMP + ATP = CDP + ADP. It catalyses the reaction dCMP + ATP = dCDP + ADP. The sequence is that of Cytidylate kinase from Chlamydia felis (strain Fe/C-56) (Chlamydophila felis).